The primary structure comprises 117 residues: Holo-[acyl-carrier-protein] synthase (117 aa).

Mg(2+) contacts are provided by Asp-8 and Glu-58.

Belongs to the P-Pant transferase superfamily. AcpS family. Mg(2+) is required as a cofactor.

It is found in the cytoplasm. The enzyme catalyses apo-[ACP] + CoA = holo-[ACP] + adenosine 3',5'-bisphosphate + H(+). Its function is as follows. Transfers the 4'-phosphopantetheine moiety from coenzyme A to a Ser of acyl-carrier-protein. The chain is Holo-[acyl-carrier-protein] synthase from Latilactobacillus sakei subsp. sakei (strain 23K) (Lactobacillus sakei subsp. sakei).